The chain runs to 155 residues: Interleukin-2 (155 aa).

An N-terminal signal peptide occupies residues 1–20; it reads MYKIQLLSCIALTLALVANG. T23 is a glycosylation site (O-linked (GalNAc...) threonine). A disulfide bond links C79 and C127.

This sequence belongs to the IL-2 family.

Its subcellular location is the secreted. Cytokine produced by activated CD4-positive helper T-cells and to a lesser extend activated CD8-positive T-cells and natural killer (NK) cells that plays pivotal roles in the immune response and tolerance. Binds to a receptor complex composed of either the high-affinity trimeric IL-2R (IL2RA/CD25, IL2RB/CD122 and IL2RG/CD132) or the low-affinity dimeric IL-2R (IL2RB and IL2RG). Interaction with the receptor leads to oligomerization and conformation changes in the IL-2R subunits resulting in downstream signaling starting with phosphorylation of JAK1 and JAK3. In turn, JAK1 and JAK3 phosphorylate the receptor to form a docking site leading to the phosphorylation of several substrates including STAT5. This process leads to activation of several pathways including STAT, phosphoinositide-3-kinase/PI3K and mitogen-activated protein kinase/MAPK pathways. Functions as a T-cell growth factor and can increase NK-cell cytolytic activity as well. Promotes strong proliferation of activated B-cells and subsequently immunoglobulin production. Plays a pivotal role in regulating the adaptive immune system by controlling the survival and proliferation of regulatory T-cells, which are required for the maintenance of immune tolerance. Moreover, participates in the differentiation and homeostasis of effector T-cell subsets, including Th1, Th2, Th17 as well as memory CD8-positive T-cells. The sequence is that of Interleukin-2 (IL2) from Moschus berezovskii (Chinese forest musk deer).